A 203-amino-acid polypeptide reads, in one-letter code: Dual specificity phosphatase 29 (203 aa).

One can recognise a Tyrosine-protein phosphatase domain in the interval 47 to 193 (HVNQVWPRIY…LRALDIALQE (147 aa)). 137-144 (HCVMGRSR) is a substrate binding site. Cysteine 138 serves as the catalytic Phosphocysteine intermediate.

It belongs to the protein-tyrosine phosphatase family. Non-receptor class dual specificity subfamily.

The protein localises to the cytoplasm. It localises to the nucleus. It carries out the reaction O-phospho-L-tyrosyl-[protein] + H2O = L-tyrosyl-[protein] + phosphate. The catalysed reaction is O-phospho-L-seryl-[protein] + H2O = L-seryl-[protein] + phosphate. It catalyses the reaction O-phospho-L-threonyl-[protein] + H2O = L-threonyl-[protein] + phosphate. Functionally, dual specificity phosphatase able to dephosphorylate phosphotyrosine, phosphoserine and phosphothreonine residues within the same substrate, with a preference for phosphotyrosine as a substrate. Involved in the modulation of AMPK and MAPK1/2 signaling pathways. In Oryzias latipes (Japanese rice fish), this protein is Dual specificity phosphatase 29 (dusp29).